The following is a 75-amino-acid chain: Insecticidal toxin OcyC10 (75 aa).

Residues 1-19 form the signal peptide; the sequence is MNFATKIVILLLVAALILA. 2 disulfide bridges follow: Cys-50-Cys-62 and Cys-56-Cys-68.

As to expression, expressed by the venom gland.

It localises to the secreted. Its function is as follows. Insecticidal toxin. This is Insecticidal toxin OcyC10 from Opisthacanthus cayaporum (South American scorpion).